The chain runs to 482 residues: Class E basic helix-loop-helix protein 41 (482 aa).

A Glycyl lysine isopeptide (Lys-Gly) (interchain with G-Cter in SUMO2) cross-link involves residue Lys31. The region spanning Thr44–Leu99 is the bHLH domain. The necessary for interaction with RXRA and repressor activity towards RXRA stretch occupies residues Leu67–Leu71. Residue Lys121 forms a Glycyl lysine isopeptide (Lys-Gly) (interchain with G-Cter in SUMO2) linkage. Residues Phe131–Leu166 enclose the Orange domain. Lys210 participates in a covalent cross-link: Glycyl lysine isopeptide (Lys-Gly) (interchain with G-Cter in SUMO2). 2 disordered regions span residues Ala228–Ala298 and Val438–Pro482. Residues Ala246–Lys256 are compositionally biased toward basic and acidic residues. A Glycyl lysine isopeptide (Lys-Gly) (interchain with G-Cter in SUMO2) cross-link involves residue Lys266. A compositionally biased stretch (gly residues) spans Arg285 to Ala297.

In terms of assembly, homodimer. Heterodimer with BHLHE40/DEC1. Interacts with CIART and BMAL1. Interacts with RXRA. Interacts with NR0B2 and HNF1A. In terms of tissue distribution, highly expressed in skeletal muscle and brain, moderately expressed in pancreas and heart, weakly expressed in placenta, lung, liver and kidney.

It localises to the nucleus. Its function is as follows. Transcriptional repressor involved in the regulation of the circadian rhythm by negatively regulating the activity of the clock genes and clock-controlled genes. Acts as the negative limb of a novel autoregulatory feedback loop (DEC loop) which differs from the one formed by the PER and CRY transcriptional repressors (PER/CRY loop). Both these loops are interlocked as it represses the expression of PER1 and in turn is repressed by PER1/2 and CRY1/2. Represses the activity of the circadian transcriptional activator: CLOCK-BMAL1 heterodimer by competing for the binding to E-box elements (5'-CACGTG-3') found within the promoters of its target genes. Negatively regulates its own expression and the expression of DBP and BHLHE41/DEC2. Acts as a corepressor of RXR and the RXR-LXR heterodimers and represses the ligand-induced RXRA/B/G, NR1H3/LXRA, NR1H4 and VDR transactivation activity. Inhibits HNF1A-mediated transactivation of CYP1A2, CYP2E1 AND CYP3A11. The chain is Class E basic helix-loop-helix protein 41 from Homo sapiens (Human).